A 191-amino-acid polypeptide reads, in one-letter code: Pentapeptide repeat protein MfpA (191 aa).

Residues 115-154 (CRLREVSLVGADLRKAVLRRADLTGSRVQDARLEEADLRG) enclose the Pentapeptide repeat domain.

This sequence belongs to the pentapeptide repeat protein family. As to quaternary structure, homodimer. Probably interacts with DNA gyrase.

Functionally, when present on multicopy plasmids confers increased resistance to fluoroquinolone antibiotics such as ciprofloxacin and sparfloxacin but not the quinolone nalidixic acid. Forms a structure that exhibits size, shape and electrostatic similarity to B-form DNA; it may bind to DNA gyrase which is postulated to protect it from fluoroquinolones. This is Pentapeptide repeat protein MfpA from Mycolicibacterium smegmatis (strain ATCC 700084 / mc(2)155) (Mycobacterium smegmatis).